The chain runs to 211 residues: ATP phosphoribosyltransferase (211 aa).

Belongs to the ATP phosphoribosyltransferase family. Short subfamily. Heteromultimer composed of HisG and HisZ subunits.

It localises to the cytoplasm. The catalysed reaction is 1-(5-phospho-beta-D-ribosyl)-ATP + diphosphate = 5-phospho-alpha-D-ribose 1-diphosphate + ATP. Its pathway is amino-acid biosynthesis; L-histidine biosynthesis; L-histidine from 5-phospho-alpha-D-ribose 1-diphosphate: step 1/9. Catalyzes the condensation of ATP and 5-phosphoribose 1-diphosphate to form N'-(5'-phosphoribosyl)-ATP (PR-ATP). Has a crucial role in the pathway because the rate of histidine biosynthesis seems to be controlled primarily by regulation of HisG enzymatic activity. In Bacillus cereus (strain AH187), this protein is ATP phosphoribosyltransferase.